Consider the following 171-residue polypeptide: S-ribosylhomocysteine lyase (171 aa).

Fe cation contacts are provided by H54, H58, and C128.

It belongs to the LuxS family. Homodimer. The cofactor is Fe cation.

The enzyme catalyses S-(5-deoxy-D-ribos-5-yl)-L-homocysteine = (S)-4,5-dihydroxypentane-2,3-dione + L-homocysteine. In terms of biological role, involved in the synthesis of autoinducer 2 (AI-2) which is secreted by bacteria and is used to communicate both the cell density and the metabolic potential of the environment. The regulation of gene expression in response to changes in cell density is called quorum sensing. Catalyzes the transformation of S-ribosylhomocysteine (RHC) to homocysteine (HC) and 4,5-dihydroxy-2,3-pentadione (DPD). The polypeptide is S-ribosylhomocysteine lyase (Yersinia pseudotuberculosis serotype O:1b (strain IP 31758)).